The following is a 216-amino-acid chain: Somatotropin (216 aa).

A signal peptide spans 1 to 26 (MAAGPRNSVLLAFALLCLPWPQEVGT). Histidine 45 is a binding site for Zn(2+). A disulfide bridge connects residues cysteine 78 and cysteine 189. Serine 131 carries the post-translational modification Phosphoserine. Position 198 (glutamate 198) interacts with Zn(2+). A disulfide bond links cysteine 206 and cysteine 214.

The protein belongs to the somatotropin/prolactin family.

The protein localises to the secreted. Functionally, plays an important role in growth control. Its major role in stimulating body growth is to stimulate the liver and other tissues to secrete IGF1. It stimulates both the differentiation and proliferation of myoblasts. It also stimulates amino acid uptake and protein synthesis in muscle and other tissues. This Felis catus (Cat) protein is Somatotropin (GH1).